The chain runs to 187 residues: Acireductone dioxygenase (187 aa).

Positions 87, 89, 93, and 136 each coordinate Fe(2+). Positions 87, 89, 93, and 136 each coordinate Ni(2+).

The protein belongs to the acireductone dioxygenase (ARD) family. Fe(2+) serves as cofactor. Ni(2+) is required as a cofactor.

Its subcellular location is the cytoplasm. The protein resides in the nucleus. It carries out the reaction 1,2-dihydroxy-5-(methylsulfanyl)pent-1-en-3-one + O2 = 4-methylsulfanyl-2-oxobutanoate + formate + 2 H(+). The enzyme catalyses 1,2-dihydroxy-5-(methylsulfanyl)pent-1-en-3-one + O2 = 3-(methylsulfanyl)propanoate + CO + formate + 2 H(+). The protein operates within amino-acid biosynthesis; L-methionine biosynthesis via salvage pathway; L-methionine from S-methyl-5-thio-alpha-D-ribose 1-phosphate: step 5/6. In terms of biological role, catalyzes 2 different reactions between oxygen and the acireductone 1,2-dihydroxy-3-keto-5-methylthiopentene (DHK-MTPene) depending upon the metal bound in the active site. Fe-containing acireductone dioxygenase (Fe-ARD) produces formate and 2-keto-4-methylthiobutyrate (KMTB), the alpha-ketoacid precursor of methionine in the methionine recycle pathway. Ni-containing acireductone dioxygenase (Ni-ARD) produces methylthiopropionate, carbon monoxide and formate, and does not lie on the methionine recycle pathway. This Cryptococcus neoformans var. neoformans serotype D (strain JEC21 / ATCC MYA-565) (Filobasidiella neoformans) protein is Acireductone dioxygenase.